The sequence spans 340 residues: Phosphate acyltransferase (340 aa).

It belongs to the PlsX family. In terms of assembly, homodimer. Probably interacts with PlsY.

It localises to the cytoplasm. The catalysed reaction is a fatty acyl-[ACP] + phosphate = an acyl phosphate + holo-[ACP]. It functions in the pathway lipid metabolism; phospholipid metabolism. Its function is as follows. Catalyzes the reversible formation of acyl-phosphate (acyl-PO(4)) from acyl-[acyl-carrier-protein] (acyl-ACP). This enzyme utilizes acyl-ACP as fatty acyl donor, but not acyl-CoA. This is Phosphate acyltransferase from Pseudomonas syringae pv. syringae (strain B728a).